We begin with the raw amino-acid sequence, 84 residues long: Exodeoxyribonuclease 7 small subunit (84 aa).

The protein belongs to the XseB family. As to quaternary structure, heterooligomer composed of large and small subunits.

The protein localises to the cytoplasm. It catalyses the reaction Exonucleolytic cleavage in either 5'- to 3'- or 3'- to 5'-direction to yield nucleoside 5'-phosphates.. In terms of biological role, bidirectionally degrades single-stranded DNA into large acid-insoluble oligonucleotides, which are then degraded further into small acid-soluble oligonucleotides. This chain is Exodeoxyribonuclease 7 small subunit, found in Herminiimonas arsenicoxydans.